A 327-amino-acid chain; its full sequence is rRNA 2'-O-methyltransferase fibrillarin (327 aa).

Positions 1–95 (MKPGFSPRGG…NQSGKNVMVE (95 aa)) are disordered. Gly residues predominate over residues 7–80 (PRGGGFGGRG…GGNRGRGGGR (74 aa)). Residues R8, R15, R21, R24, R28, and R31 each carry the asymmetric dimethylarginine modification. Residues K90, K108, and K115 each participate in a glycyl lysine isopeptide (Lys-Gly) (interchain with G-Cter in SUMO2) cross-link. K108 bears the N6-acetyllysine mark. S122 carries the post-translational modification Phosphoserine. The residue at position 127 (K127) is an N6-acetyllysine. Phosphoserine is present on residues S130 and S132. Residues K137, K149, and K164 each participate in a glycyl lysine isopeptide (Lys-Gly) (interchain with G-Cter in SUMO2) cross-link. Residues 178 to 179 (TT) and 197 to 198 (EF) contribute to the S-adenosyl-L-methionine site. N6-acetyllysine is present on residues K211 and K212. S-adenosyl-L-methionine contacts are provided by residues 222-223 (DA) and 242-245 (DVAQ).

This sequence belongs to the methyltransferase superfamily. Fibrillarin family. As to quaternary structure, component of box C/D small nucleolar ribonucleoprotein (snoRNP) particles that contain SNU13, FBL, NOP5 and NOP56, plus a guide RNA. It is associated with the U3, U8, U13, X and Y small nuclear RNAs. Component of several ribosomal and nucleolar protein complexes. Part of the small subunit (SSU) processome, composed of more than 70 proteins and the RNA chaperone small nucleolar RNA (snoRNA) U3. Interacts with PRMT5 and UTP20. Interacts with DDX5 and C1QBP. Interacts with NOL11. Interacts with PIH1D1. Interacts with RRP1B. Interacts with NOLC1. Interacts with SDE2. Interacts with NOP2 and NOP56. In terms of processing, by homology to other fibrillarins, some or all of the N-terminal domain arginines are modified to asymmetric dimethylarginine (DMA). Ubiquitinated. Ubiquitination leads to proteasomal degradation. Deubiquitinated by USP36. Post-translationally, acetylated by CREBBP/CBP, preventing methylation of 'Gln-105' of histone H2A (H2AQ104me), without affecting rRNA methylation. Deacetylation by SIRT7 restores methylation of 'Gln-105' of histone H2A (H2AQ104me).

It is found in the nucleus. Its subcellular location is the nucleolus. The protein localises to the nucleoplasm. It carries out the reaction L-glutaminyl-[histone H2A] + S-adenosyl-L-methionine = N(5)-methyl-L-glutaminyl-[histone H2A] + S-adenosyl-L-homocysteine + H(+). The enzyme catalyses a ribonucleotide in rRNA + S-adenosyl-L-methionine = a 2'-O-methylribonucleotide in rRNA + S-adenosyl-L-homocysteine + H(+). The catalysed reaction is a ribonucleotide in U6 snRNA + S-adenosyl-L-methionine = a 2'-O-methylribonucleotide in U6 snRNA + S-adenosyl-L-homocysteine + H(+). Functionally, S-adenosyl-L-methionine-dependent methyltransferase that has the ability to methylate both RNAs and proteins. Involved in pre-rRNA processing by catalyzing the site-specific 2'-hydroxyl methylation of ribose moieties in pre-ribosomal RNA. Site specificity is provided by a guide RNA that base pairs with the substrate. Methylation occurs at a characteristic distance from the sequence involved in base pairing with the guide RNA. Probably catalyzes 2'-O-methylation of U6 snRNAs in box C/D RNP complexes. U6 snRNA 2'-O-methylation is required for mRNA splicing fidelity. Also acts as a protein methyltransferase by mediating methylation of 'Gln-105' of histone H2A (H2AQ104me), a modification that impairs binding of the FACT complex and is specifically present at 35S ribosomal DNA locus. Part of the small subunit (SSU) processome, first precursor of the small eukaryotic ribosomal subunit. During the assembly of the SSU processome in the nucleolus, many ribosome biogenesis factors, an RNA chaperone and ribosomal proteins associate with the nascent pre-rRNA and work in concert to generate RNA folding, modifications, rearrangements and cleavage as well as targeted degradation of pre-ribosomal RNA by the RNA exosome. In Mus musculus (Mouse), this protein is rRNA 2'-O-methyltransferase fibrillarin.